The primary structure comprises 362 residues: Probable cinnamyl alcohol dehydrogenase 8D (362 aa).

C45 is a Zn(2+) binding site. Residue T47 participates in NADP(+) binding. Zn(2+)-binding residues include H67, E68, C98, C101, C104, C112, and C161. Residues T165, 186 to 191 (GLGGLG), 209 to 214 (SSSPAK), T249, G273, and 296 to 298 (NGV) each bind NADP(+).

It belongs to the zinc-containing alcohol dehydrogenase family. Homodimer. Zn(2+) is required as a cofactor.

It catalyses the reaction (E)-cinnamyl alcohol + NADP(+) = (E)-cinnamaldehyde + NADPH + H(+). It carries out the reaction (E)-coniferol + NADP(+) = (E)-coniferaldehyde + NADPH + H(+). The catalysed reaction is (E)-sinapyl alcohol + NADP(+) = (E)-sinapaldehyde + NADPH + H(+). The enzyme catalyses (E)-4-coumaroyl alcohol + NADP(+) = (E)-4-coumaraldehyde + NADPH + H(+). It catalyses the reaction (E)-caffeyl alcohol + NADP(+) = (E)-caffeyl aldehyde + NADPH + H(+). Its pathway is aromatic compound metabolism; phenylpropanoid biosynthesis. Functionally, involved in lignin biosynthesis. Catalyzes the final step specific for the production of lignin monomers. Catalyzes the NADPH-dependent reduction of coniferaldehyde, 5-hydroxyconiferaldehyde, sinapaldehyde, 4-coumaraldehyde and caffeyl aldehyde to their respective alcohols. The protein is Probable cinnamyl alcohol dehydrogenase 8D of Oryza sativa subsp. japonica (Rice).